We begin with the raw amino-acid sequence, 383 residues long: Thioredoxin reductase 2 (383 aa).

FAD is bound by residues 66-69, 87-88, 95-100, N109, V142, C200, D345, and 352-354; these read SGPA, FE, IAPGGQ, and RQA. C197 and C200 form a disulfide bridge.

Belongs to the class-II pyridine nucleotide-disulfide oxidoreductase family. As to quaternary structure, homodimer. It depends on FAD as a cofactor.

It is found in the cytoplasm. Its subcellular location is the mitochondrion matrix. It catalyses the reaction [thioredoxin]-dithiol + NADP(+) = [thioredoxin]-disulfide + NADPH + H(+). Its function is as follows. Possesses thioredoxin-disulfide reductase activity towards thioredoxins O1, O2 and F3. In Arabidopsis thaliana (Mouse-ear cress), this protein is Thioredoxin reductase 2 (NTR2).